The primary structure comprises 191 residues: Ribosomal RNA small subunit methyltransferase G (191 aa).

S-adenosyl-L-methionine-binding positions include Gly-62, Leu-67, 111-112, and Arg-124; that span reads IE.

It belongs to the methyltransferase superfamily. RNA methyltransferase RsmG family.

The protein localises to the cytoplasm. The catalysed reaction is guanosine(527) in 16S rRNA + S-adenosyl-L-methionine = N(7)-methylguanosine(527) in 16S rRNA + S-adenosyl-L-homocysteine. Its function is as follows. Specifically methylates the N7 position of guanine in position 527 of 16S rRNA. The chain is Ribosomal RNA small subunit methyltransferase G from Rickettsia rickettsii (strain Sheila Smith).